We begin with the raw amino-acid sequence, 338 residues long: MAHVAEWKKKEVEELTKLLQDYPVIALVDVADVPAYPLSKMRESLRDKAVLRVSRNTLIELALKKAAQELNDSNLEKLIEHIQGGTGILVTKINPFKLYKFLEESKKPAPAKAGAPAPRDVVVPAGPTPLSPGPLVGEMQALGIPARIEKGKVSIQKDTVVLKAGEIITPQLANILNQLGIEPLEVGLKLLAAYEHGIVYTPEVLAIDEEQYISMLQQAYMHAFNLSVNVAYPTKQTIEAIIQKAFLGAKNVAVEAGYITKESAGDILGKAFRIALLIAQELPEELLDEKTKELLNQQAQVIAAQPQPAEEAEEKVEEEEEEEKEEEEALAGLGALFG.

The disordered stretch occupies residues 302-338; the sequence is IAAQPQPAEEAEEKVEEEEEEEKEEEEALAGLGALFG. A compositionally biased stretch (acidic residues) spans 310 to 329; it reads EEAEEKVEEEEEEEKEEEEA.

Belongs to the universal ribosomal protein uL10 family. In terms of assembly, part of the 50S ribosomal subunit. Forms part of the ribosomal stalk which helps the ribosome interact with GTP-bound translation factors. Forms a heptameric L10(L12)2(L12)2(L12)2 complex, where L10 forms an elongated spine to which the L12 dimers bind in a sequential fashion.

Functionally, forms part of the ribosomal stalk, playing a central role in the interaction of the ribosome with GTP-bound translation factors. The sequence is that of Large ribosomal subunit protein uL10 from Thermococcus sibiricus (strain DSM 12597 / MM 739).